Here is a 134-residue protein sequence, read N- to C-terminus: Small ribosomal subunit protein uS8c (134 aa).

Belongs to the universal ribosomal protein uS8 family. In terms of assembly, part of the 30S ribosomal subunit.

The protein resides in the plastid. It localises to the chloroplast. Its function is as follows. One of the primary rRNA binding proteins, it binds directly to 16S rRNA central domain where it helps coordinate assembly of the platform of the 30S subunit. This chain is Small ribosomal subunit protein uS8c (rps8), found in Lepidium virginicum (Virginia pepperweed).